Here is a 467-residue protein sequence, read N- to C-terminus: ATP synthase subunit beta (467 aa).

Residue 150–157 (GGAGVGKT) coordinates ATP.

It belongs to the ATPase alpha/beta chains family. In terms of assembly, F-type ATPases have 2 components, CF(1) - the catalytic core - and CF(0) - the membrane proton channel. CF(1) has five subunits: alpha(3), beta(3), gamma(1), delta(1), epsilon(1). CF(0) has three main subunits: a(1), b(2) and c(9-12). The alpha and beta chains form an alternating ring which encloses part of the gamma chain. CF(1) is attached to CF(0) by a central stalk formed by the gamma and epsilon chains, while a peripheral stalk is formed by the delta and b chains.

Its subcellular location is the cell inner membrane. The enzyme catalyses ATP + H2O + 4 H(+)(in) = ADP + phosphate + 5 H(+)(out). Functionally, produces ATP from ADP in the presence of a proton gradient across the membrane. The catalytic sites are hosted primarily by the beta subunits. This chain is ATP synthase subunit beta, found in Vibrio cholerae serotype O1 (strain ATCC 39541 / Classical Ogawa 395 / O395).